Reading from the N-terminus, the 175-residue chain is NADH-quinone oxidoreductase subunit I 1 (175 aa).

2 consecutive 4Fe-4S ferredoxin-type domains span residues 44–74 and 90–119; these read LNRWPDGLEKCIGCELCAWACPADAIFVESA and RVYQINYLRCIGCGFCIEACPTRALTMIND. Residues cysteine 54, cysteine 57, cysteine 60, cysteine 64, cysteine 99, cysteine 102, cysteine 105, and cysteine 109 each coordinate [4Fe-4S] cluster.

The protein belongs to the complex I 23 kDa subunit family. In terms of assembly, NDH-1 is composed of 14 different subunits. Subunits NuoA, H, J, K, L, M, N constitute the membrane sector of the complex. It depends on [4Fe-4S] cluster as a cofactor.

It is found in the cell membrane. The catalysed reaction is a quinone + NADH + 5 H(+)(in) = a quinol + NAD(+) + 4 H(+)(out). Its function is as follows. NDH-1 shuttles electrons from NADH, via FMN and iron-sulfur (Fe-S) centers, to quinones in the respiratory chain. The immediate electron acceptor for the enzyme in this species is believed to be menaquinone. Couples the redox reaction to proton translocation (for every two electrons transferred, four hydrogen ions are translocated across the cytoplasmic membrane), and thus conserves the redox energy in a proton gradient. In Mycolicibacterium paratuberculosis (strain ATCC BAA-968 / K-10) (Mycobacterium paratuberculosis), this protein is NADH-quinone oxidoreductase subunit I 1.